The sequence spans 799 residues: Potassium transporter 21 (799 aa).

Topologically, residues Met1–Ser56 are cytoplasmic. A helical membrane pass occupies residues Leu57–Tyr77. Residues Ser78–Gly93 lie on the Extracellular side of the membrane. A helical membrane pass occupies residues Val94–Ala114. Residues Leu115–Lys181 lie on the Cytoplasmic side of the membrane. Residues Ile182–Thr202 traverse the membrane as a helical segment. At Pro203 to Pro219 the chain is on the extracellular side. Residues His220–Ile240 traverse the membrane as a helical segment. Residues Gln241–Ser251 are Cytoplasmic-facing. The helical transmembrane segment at Phe252 to Ile272 threads the bilayer. At Lys273 to Ser301 the chain is on the extracellular side. Residues Leu302 to Phe322 form a helical membrane-spanning segment. At Ser323–Gln328 the chain is on the cytoplasmic side. The helical transmembrane segment at Leu329 to Phe349 threads the bilayer. Residues Leu350 to Phe362 lie on the Extracellular side of the membrane. The chain crosses the membrane as a helical span at residues Ala363–Ile383. At Gly384–Gln420 the chain is on the cytoplasmic side. The helical transmembrane segment at Leu421–Phe441 threads the bilayer. The Extracellular portion of the chain corresponds to Lys442 to Glu452. Residues Ile453 to Val473 traverse the membrane as a helical segment. Residues Trp474 to Lys475 lie on the Cytoplasmic side of the membrane. Residues Ile476–Leu496 form a helical membrane-spanning segment. Topologically, residues Ser497 to Tyr508 are extracellular. Residues Val509 to Val529 form a helical membrane-spanning segment. The Cytoplasmic portion of the chain corresponds to Lys530 to Ile799.

The protein belongs to the HAK/KUP transporter (TC 2.A.72.3) family.

It localises to the membrane. Functionally, high-affinity potassium transporter. The protein is Potassium transporter 21 (HAK21) of Oryza sativa subsp. japonica (Rice).